The sequence spans 890 residues: Translation initiation factor IF-2 (890 aa).

The disordered stretch occupies residues 45-304 (LIDHLNQKNS…LQQGFQKPAQ (260 aa)). Residues 67-81 (STLNIPGTGGKSKSV) are compositionally biased toward polar residues. Residues 92–217 (VKRDPQEAER…RMAEENKWTD (126 aa)) are compositionally biased toward basic and acidic residues. A compositionally biased stretch (basic residues) spans 252 to 266 (GRGRNAKAARPKKGN). Positions 267–280 (KHAESKADREEARA) are enriched in basic and acidic residues. The tr-type G domain maps to 389 to 558 (PRAPVVTIMG…LLQAEVLELK (170 aa)). Residues 398-405 (GHVDHGKT) are G1. Position 398–405 (398–405 (GHVDHGKT)) interacts with GTP. The segment at 423-427 (GITQH) is G2. The G3 stretch occupies residues 444 to 447 (DTPG). GTP contacts are provided by residues 444–448 (DTPGH) and 498–501 (NKID). Positions 498–501 (NKID) are G4. A G5 region spans residues 534–536 (SAK). Residue K808 is modified to N6-acetyllysine.

The protein belongs to the TRAFAC class translation factor GTPase superfamily. Classic translation factor GTPase family. IF-2 subfamily.

It is found in the cytoplasm. In terms of biological role, one of the essential components for the initiation of protein synthesis. Protects formylmethionyl-tRNA from spontaneous hydrolysis and promotes its binding to the 30S ribosomal subunits. Also involved in the hydrolysis of GTP during the formation of the 70S ribosomal complex. The sequence is that of Translation initiation factor IF-2 from Shigella sonnei (strain Ss046).